The primary structure comprises 312 residues: MARLSEPSPYVEFDRTQWRALRMSTPLKLTEDELVRLRGLGEKIDLLEVEEVYLPLARLIHLQVAARQALFATTAQFLGEPQQNPDRPVPFIIGVAGSVAVGKSTTARVLQALLARWEHHPRVDLVTTDGFLYSNSELSRRNLMHRKGFPESYDRRGLMRFVTAIKSGADAACAPVYSHLLYDIVAGEKQIIEHPDILILEGLNVLQTGPALMVSDLFDFSVYVDARIEDIENWYISRFLSMRAGAFADPASHFHHYSTLTDEQAVFAARDIWHSINRPNLIENILPTRPRATLVLRKDSDHSINRLRLRKL.

97-104 is an ATP binding site; it reads GSVAVGKS.

The protein belongs to the prokaryotic pantothenate kinase family.

It is found in the cytoplasm. The catalysed reaction is (R)-pantothenate + ATP = (R)-4'-phosphopantothenate + ADP + H(+). The protein operates within cofactor biosynthesis; coenzyme A biosynthesis; CoA from (R)-pantothenate: step 1/5. The chain is Pantothenate kinase from Mycolicibacterium vanbaalenii (strain DSM 7251 / JCM 13017 / BCRC 16820 / KCTC 9966 / NRRL B-24157 / PYR-1) (Mycobacterium vanbaalenii).